Here is a 301-residue protein sequence, read N- to C-terminus: Methionyl-tRNA formyltransferase (301 aa).

Residue 110-113 (SLLP) coordinates (6S)-5,6,7,8-tetrahydrofolate.

The protein belongs to the Fmt family.

It carries out the reaction L-methionyl-tRNA(fMet) + (6R)-10-formyltetrahydrofolate = N-formyl-L-methionyl-tRNA(fMet) + (6S)-5,6,7,8-tetrahydrofolate + H(+). In terms of biological role, attaches a formyl group to the free amino group of methionyl-tRNA(fMet). The formyl group appears to play a dual role in the initiator identity of N-formylmethionyl-tRNA by promoting its recognition by IF2 and preventing the misappropriation of this tRNA by the elongation apparatus. This Acidiphilium cryptum (strain JF-5) protein is Methionyl-tRNA formyltransferase.